Consider the following 89-residue polypeptide: Sec-independent protein translocase protein TatA (89 aa).

The chain crosses the membrane as a helical span at residues 1–21 (MGGISIWQLLIIAVIVVLLFG). The interval 65–89 (ADKQADTNQEQAKTEDAKRHDKEQV) is disordered. The span at 76-89 (AKTEDAKRHDKEQV) shows a compositional bias: basic and acidic residues.

This sequence belongs to the TatA/E family. As to quaternary structure, the Tat system comprises two distinct complexes: a TatABC complex, containing multiple copies of TatA, TatB and TatC subunits, and a separate TatA complex, containing only TatA subunits. Substrates initially bind to the TatABC complex, which probably triggers association of the separate TatA complex to form the active translocon.

The protein resides in the cell inner membrane. Its function is as follows. Part of the twin-arginine translocation (Tat) system that transports large folded proteins containing a characteristic twin-arginine motif in their signal peptide across membranes. TatA could form the protein-conducting channel of the Tat system. This is Sec-independent protein translocase protein TatA from Shigella flexneri.